We begin with the raw amino-acid sequence, 733 residues long: Methylmalonyl-CoA mutase large subunit (733 aa).

Over residues 1 to 10 the composition is skewed to acidic residues; sequence MRIPEFDDIE. Positions 1-22 are disordered; sequence MRIPEFDDIELGAGGGPSGSAE. Residues tyrosine 78, methionine 81, threonine 88, arginine 90, tyrosine 92, and serine 117 each coordinate (R)-methylmalonyl-CoA. The cob(II)alamin site is built by phenylalanine 120 and alanine 142. (R)-methylmalonyl-CoA-binding residues include threonine 198 and glutamine 200. Cob(II)alamin-binding residues include valine 209 and arginine 210. The (R)-methylmalonyl-CoA site is built by arginine 210, histidine 247, arginine 286, and serine 288. The cob(II)alamin site is built by glycine 336, glutamate 373, alanine 376, glycine 612, histidine 613, aspartate 614, arginine 615, serine 658, leucine 660, glycine 689, and threonine 712. The B12-binding domain occupies 600-732; it reads RPRILVAKMG…KRLAADLGHE (133 aa).

The protein belongs to the methylmalonyl-CoA mutase family. Heterodimer of an alpha and a beta chain. Requires adenosylcob(III)alamin as cofactor.

It carries out the reaction (R)-methylmalonyl-CoA = succinyl-CoA. Functionally, catalyzes the isomerization of succinyl-CoA to methylmalonyl-CoA during synthesis of propionate from tricarboxylic acid-cycle intermediates. This conversion most likely represents an important source of building blocks for polyketide antibiotic biosynthesis. It is unable to catalyze the conversion of isobutyryl-CoA into N-butyryl-CoA. The protein is Methylmalonyl-CoA mutase large subunit (mutB) of Streptomyces virginiae (Streptomyces cinnamonensis).